Consider the following 276-residue polypeptide: Sulfur carrier protein FdhD (276 aa).

Cys120 functions as the Cysteine persulfide intermediate in the catalytic mechanism.

This sequence belongs to the FdhD family.

It is found in the cytoplasm. Required for formate dehydrogenase (FDH) activity. Acts as a sulfur carrier protein that transfers sulfur from IscS to the molybdenum cofactor prior to its insertion into FDH. This is Sulfur carrier protein FdhD from Bordetella bronchiseptica (strain ATCC BAA-588 / NCTC 13252 / RB50) (Alcaligenes bronchisepticus).